The sequence spans 228 residues: L-ribulose-5-phosphate 4-epimerase UlaF (228 aa).

Substrate contacts are provided by residues 26 to 27, 43 to 44, and 72 to 73; these read GN, SG, and SS. The Zn(2+) site is built by D74, H93, and H95. The active-site Proton donor/acceptor is D118. H167 provides a ligand contact to Zn(2+). Residue Y225 is the Proton donor/acceptor of the active site.

Belongs to the aldolase class II family. AraD/FucA subfamily. The cofactor is Zn(2+).

The catalysed reaction is L-ribulose 5-phosphate = D-xylulose 5-phosphate. It participates in cofactor degradation; L-ascorbate degradation; D-xylulose 5-phosphate from L-ascorbate: step 4/4. Functionally, catalyzes the isomerization of L-ribulose 5-phosphate to D-xylulose 5-phosphate. Is involved in the anaerobic L-ascorbate utilization. The chain is L-ribulose-5-phosphate 4-epimerase UlaF from Escherichia coli (strain SMS-3-5 / SECEC).